Here is a 202-residue protein sequence, read N- to C-terminus: ATP-dependent Clp protease proteolytic subunit (202 aa).

The active-site Nucleophile is Ser-106. Residue His-131 is part of the active site.

The protein belongs to the peptidase S14 family. As to quaternary structure, fourteen ClpP subunits assemble into 2 heptameric rings which stack back to back to give a disk-like structure with a central cavity, resembling the structure of eukaryotic proteasomes.

It localises to the cytoplasm. The enzyme catalyses Hydrolysis of proteins to small peptides in the presence of ATP and magnesium. alpha-casein is the usual test substrate. In the absence of ATP, only oligopeptides shorter than five residues are hydrolyzed (such as succinyl-Leu-Tyr-|-NHMec, and Leu-Tyr-Leu-|-Tyr-Trp, in which cleavage of the -Tyr-|-Leu- and -Tyr-|-Trp bonds also occurs).. In terms of biological role, cleaves peptides in various proteins in a process that requires ATP hydrolysis. Has a chymotrypsin-like activity. Plays a major role in the degradation of misfolded proteins. The polypeptide is ATP-dependent Clp protease proteolytic subunit (Variovorax paradoxus (strain S110)).